A 459-amino-acid chain; its full sequence is Glutamate--tRNA ligase 2 (459 aa).

The short motif at 8 to 18 is the 'HIGH' region element; the sequence is PSPTGYLHIGG. The short motif at 237-241 is the 'KMSKS' region element; the sequence is KLSKR. Lysine 240 is a binding site for ATP.

The protein belongs to the class-I aminoacyl-tRNA synthetase family. Glutamate--tRNA ligase type 1 subfamily. In terms of assembly, monomer.

Its subcellular location is the cytoplasm. The catalysed reaction is tRNA(Glu) + L-glutamate + ATP = L-glutamyl-tRNA(Glu) + AMP + diphosphate. In terms of biological role, catalyzes the attachment of glutamate to tRNA(Glu) in a two-step reaction: glutamate is first activated by ATP to form Glu-AMP and then transferred to the acceptor end of tRNA(Glu). This Campylobacter concisus (strain 13826) protein is Glutamate--tRNA ligase 2.